We begin with the raw amino-acid sequence, 448 residues long: Adenylosuccinate synthetase (448 aa).

Residues 22–28 (GDEGKGK) and 50–52 (GHT) contribute to the GTP site. D23 functions as the Proton acceptor in the catalytic mechanism. The Mg(2+) site is built by D23 and G50. IMP is bound by residues 23-26 (DEGK), 48-51 (NAGH), T139, R153, Q234, T249, and R321. H51 serves as the catalytic Proton donor. Position 317–323 (317–323 (SVTGRPR)) interacts with substrate. Residues R323, 349-351 (KLD), and 431-433 (STG) contribute to the GTP site.

Belongs to the adenylosuccinate synthetase family. Homodimer. It depends on Mg(2+) as a cofactor.

The protein resides in the cytoplasm. It catalyses the reaction IMP + L-aspartate + GTP = N(6)-(1,2-dicarboxyethyl)-AMP + GDP + phosphate + 2 H(+). It participates in purine metabolism; AMP biosynthesis via de novo pathway; AMP from IMP: step 1/2. In terms of biological role, plays an important role in the de novo pathway of purine nucleotide biosynthesis. Catalyzes the first committed step in the biosynthesis of AMP from IMP. The polypeptide is Adenylosuccinate synthetase (Burkholderia mallei (strain NCTC 10247)).